Here is a 22-residue protein sequence, read N- to C-terminus: Lantibiotic mutacin B-Ny266 (22 aa).

The segment at residues 3-7 (SWSFC) is a cross-link (lanthionine (Ser-Cys)). At S5 the chain carries 2,3-didehydroalanine (Ser). The beta-methyllanthionine (Thr-Cys) cross-link spans 8 to 11 (TPGC). T14 carries the post-translational modification 2,3-didehydrobutyrine. Positions 16-21 (SFNSYC) form a cross-link, lanthionine (Ser-Cys). A cross-link (S-(2-aminovinyl)-D-cysteine (Ser-Cys)) is located at residues 19–22 (SYCC).

Maturation of lantibiotics involves the enzymatic conversion of Thr, and Ser into dehydrated AA and the formation of thioether bonds with cysteine. The C-terminal lanthionine undergoes decarboxylation. This is followed by membrane translocation and cleavage of the modified precursor. Post-translationally, it is not established whether the 2,3-didehydrobutyrine is the E- or Z-isomer.

In terms of biological role, lanthionine-containing peptide antibiotic (lantibiotic) active on Gram-positive bacteria. The bactericidal activity of lantibiotics is based on depolarization of energized bacterial cytoplasmic membranes, initiated by the formation of aqueous transmembrane pores. In Streptococcus mutans, this protein is Lantibiotic mutacin B-Ny266.